A 213-amino-acid polypeptide reads, in one-letter code: Na(+)-translocating NADH-quinone reductase subunit D (213 aa).

The next 6 helical transmembrane spans lie at 21 to 41 (PLIA…VKTA), 42 to 62 (ITMG…VSLL), 77 to 97 (IIIS…FFNI), 101 to 121 (LSVF…AESL), 131 to 151 (FLDG…VSII), and 183 to 203 (FGLM…IWVV).

The protein belongs to the NqrDE/RnfAE family. In terms of assembly, composed of six subunits; NqrA, NqrB, NqrC, NqrD, NqrE and NqrF.

It localises to the cell inner membrane. The catalysed reaction is a ubiquinone + n Na(+)(in) + NADH + H(+) = a ubiquinol + n Na(+)(out) + NAD(+). Functionally, NQR complex catalyzes the reduction of ubiquinone-1 to ubiquinol by two successive reactions, coupled with the transport of Na(+) ions from the cytoplasm to the periplasm. NqrA to NqrE are probably involved in the second step, the conversion of ubisemiquinone to ubiquinol. This chain is Na(+)-translocating NADH-quinone reductase subunit D, found in Chlamydia felis (strain Fe/C-56) (Chlamydophila felis).